Here is a 175-residue protein sequence, read N- to C-terminus: NADH-ubiquinone oxidoreductase chain 6 (175 aa).

Transmembrane regions (helical) follow at residues 1–21, 25–45, 51–71, 87–107, 112–132, and 148–168; these read MMYI…GFSS, PVYG…IIMG, LGLV…GYTI, VVLG…MWLF, ELVG…EGGF, and YGFW…FIAI.

This sequence belongs to the complex I subunit 6 family. As to quaternary structure, core subunit of respiratory chain NADH dehydrogenase (Complex I) which is composed of 45 different subunits.

It localises to the mitochondrion inner membrane. The catalysed reaction is a ubiquinone + NADH + 5 H(+)(in) = a ubiquinol + NAD(+) + 4 H(+)(out). In terms of biological role, core subunit of the mitochondrial membrane respiratory chain NADH dehydrogenase (Complex I) which catalyzes electron transfer from NADH through the respiratory chain, using ubiquinone as an electron acceptor. Essential for the catalytic activity and assembly of complex I. The polypeptide is NADH-ubiquinone oxidoreductase chain 6 (MT-ND6) (Loxodonta africana (African elephant)).